The primary structure comprises 395 residues: Glyceraldehyde-3-phosphate dehydrogenase, testis-specific (395 aa).

Residues Met-1–Val-60 form a testis-specific N-terminal extension region. The tract at residues Gln-19 to Lys-59 is disordered. 2 stretches are compositionally biased toward pro residues: residues Glu-31 to Glu-41 and Pro-48 to Pro-57. Residues Arg-72–Ile-73, Asp-93, and Lys-138 each bind NAD(+). Residues Ser-210–Thr-212, Thr-241, Thr-270–Gly-271, and Arg-293 contribute to the D-glyceraldehyde 3-phosphate site. Cys-211 serves as the catalytic Nucleophile. Position 375 (Asn-375) interacts with NAD(+).

This sequence belongs to the glyceraldehyde-3-phosphate dehydrogenase family. As to quaternary structure, homotetramer.

It is found in the cytoplasm. It catalyses the reaction D-glyceraldehyde 3-phosphate + phosphate + NAD(+) = (2R)-3-phospho-glyceroyl phosphate + NADH + H(+). The protein operates within carbohydrate degradation; glycolysis; pyruvate from D-glyceraldehyde 3-phosphate: step 1/5. May play an important role in regulating the switch between different pathways for energy production during spermiogenesis and in the spermatozoon. Required for sperm motility and male fertility. The sequence is that of Glyceraldehyde-3-phosphate dehydrogenase, testis-specific (GAPDHS) from Bos taurus (Bovine).